Reading from the N-terminus, the 541-residue chain is Apolipoprotein N-acyltransferase (541 aa).

A run of 6 helical transmembrane segments spans residues 21–41 (MSWF…WYSL), 54–74 (LTSL…SWML), 89–109 (VLIS…FFIV), 116–136 (ILWC…YFLC), 157–177 (FGGF…GISF), and 189–209 (YVWL…YEYL). The CN hydrolase domain maps to 219-500 (LRVAVIQPAS…PGVLQVSLPM (282 aa)). Glutamate 265 (proton acceptor) is an active-site residue. Lysine 350 is a catalytic residue. The Nucleophile role is filled by cysteine 405. The helical transmembrane segment at 506–526 (LYAFWGDFPMIFLSLLSIGCI) threads the bilayer.

Belongs to the CN hydrolase family. Apolipoprotein N-acyltransferase subfamily.

It is found in the cell inner membrane. It carries out the reaction N-terminal S-1,2-diacyl-sn-glyceryl-L-cysteinyl-[lipoprotein] + a glycerophospholipid = N-acyl-S-1,2-diacyl-sn-glyceryl-L-cysteinyl-[lipoprotein] + a 2-acyl-sn-glycero-3-phospholipid + H(+). It participates in protein modification; lipoprotein biosynthesis (N-acyl transfer). Its function is as follows. Catalyzes the phospholipid dependent N-acylation of the N-terminal cysteine of apolipoprotein, the last step in lipoprotein maturation. This chain is Apolipoprotein N-acyltransferase, found in Chlamydia caviae (strain ATCC VR-813 / DSM 19441 / 03DC25 / GPIC) (Chlamydophila caviae).